A 69-amino-acid chain; its full sequence is U-Asilidin(12)-Dg3a (69 aa).

The N-terminal stretch at 1-19 (MRFLNIFLFFAAIIAFATA) is a signal peptide. A propeptide spanning residues 20–33 (SQVFEEDEIDMEPR) is cleaved from the precursor. Intrachain disulfides connect Cys-36–Cys-59, Cys-45–Cys-65, and Cys-49–Cys-67.

It belongs to the asilidin-12 family. In terms of tissue distribution, expressed by the venom gland.

It localises to the secreted. Functionally, moderately increases Kv11.1/KCNH2/ERG1 currents and shifts the voltage-dependence of the channel activation to hyperpolarised potentials. In vivo, induces neurotoxic effects when injected into insects (tested on L.cuprina and A.domesticus). The sequence is that of U-Asilidin(12)-Dg3a from Dolopus genitalis (Giant Australian assassin fly).